We begin with the raw amino-acid sequence, 893 residues long: Beta-adaptin-like protein C (893 aa).

Residues Thr-593–Ser-621 form a disordered region.

The protein belongs to the adaptor complexes large subunit family. Adaptor protein complexes are heterotetramers composed of two large adaptins (beta-type subunit and alpha-type or delta-type or epsilon-type or gamma-type subunit), a medium adaptin (mu-type subunit) and a small adaptin (sigma-type subunit).

Its subcellular location is the golgi apparatus. It localises to the trans-Golgi network. The protein resides in the cytoplasmic vesicle. The protein localises to the clathrin-coated vesicle membrane. Functionally, subunit of clathrin-associated adaptor protein complex that plays a role in protein sorting in the late-Golgi/trans-Golgi network (TGN) and/or endosomes. The AP complexes mediate both the recruitment of clathrin to membranes and the recognition of sorting signals within the cytosolic tails of transmembrane cargo molecules. The chain is Beta-adaptin-like protein C (BETAC-AD) from Arabidopsis thaliana (Mouse-ear cress).